The sequence spans 423 residues: MSYVIDRRLNGKNKSTVNRQRFLRRYRDHIKKAVEEAVSRRSITDMEHGEQISIPGRDIDEPVLHHGRGGKQTVVHPGNKEFTTGEHIQRPQGGGGGKGPGKAGNSGEGMDEFVFQITQEEFLEFMFEDLELPNLVKRNLTGTDTFKTVRAGISNEGNPSRINIIRTLRSAHARRIALSGSSRAKLRDAKEELARLKREEPDNFGDIQEIEAEIEKLSARIHRVPFLDTFDLKYNLLVKQPNPSSKAVMFCLMDVSGSMTQATKDIAKRFFILLYLFLKRNYDKIDVVFIRHHTSAREVDEEEFFYSRETGGTIVSSALKLMQEIMAERYPANEWNIYAAQASDGDNWNDDSPICRDILINQIMPFVQYYTYVEITPREHQALWFEYERIGEAFADTFAQQQLVSAGDIYPVFRELFQRRLVT.

A disordered region spans residues 64–109 (LHHGRGGKQTVVHPGNKEFTTGEHIQRPQGGGGGKGPGKAGNSGEG). A compositionally biased stretch (gly residues) spans 92-107 (QGGGGGKGPGKAGNSG).

It belongs to the UPF0229 family.

This Pseudomonas fluorescens (strain SBW25) protein is UPF0229 protein PFLU_5583.